Consider the following 1007-residue polypeptide: Serine/threonine-protein kinase PRP4 homolog (1007 aa).

The disordered stretch occupies residues 1 to 102 (MAATEPPSLR…LSPAKRTKLD (102 aa)). Ala-2 carries the post-translational modification N-acetylalanine. Phosphoserine occurs at positions 8, 21, 24, and 33. Basic residues-rich tracts occupy residues 40 to 60 (KHSR…KHKH) and 68 to 82 (KKHK…HKRK). The segment covering 83–92 (EVIEASDKEG) has biased composition (basic and acidic residues). A phosphoserine mark is found at Ser-88 and Ser-94. N6-acetyllysine; alternate is present on Lys-100. Lys-100 participates in a covalent cross-link: Glycyl lysine isopeptide (Lys-Gly) (interchain with G-Cter in SUMO2); alternate. Lys-112 is covalently cross-linked (Glycyl lysine isopeptide (Lys-Gly) (interchain with G-Cter in SUMO2)). Residue Lys-118 forms a Glycyl lysine isopeptide (Lys-Gly) (interchain with G-Cter in SUMO2); alternate linkage. Residue Lys-118 forms a Glycyl lysine isopeptide (Lys-Gly) (interchain with G-Cter in SUMO1); alternate linkage. Ser-132 bears the Phosphoserine mark. Tyr-141 bears the Phosphotyrosine mark. Disordered regions lie at residues 141-535 (YESG…EDEE) and 560-583 (NISV…SPDD). Ser-143, Ser-145, and Ser-167 each carry phosphoserine. Residues 158 to 169 (GNRSSTRSSSTR) show a composition bias toward low complexity. Residues Lys-171 and Lys-178 each participate in a glycyl lysine isopeptide (Lys-Gly) (interchain with G-Cter in SUMO2) cross-link. Composition is skewed to basic residues over residues 180 to 203 (SAKK…RKSK) and 215 to 231 (RSKS…SKRS). Residues Ser-240, Ser-242, Ser-258, Ser-278, Ser-292, and Ser-294 each carry the phosphoserine modification. The segment covering 248–271 (RSQEKVGKARSPAEEKMKSEEKGK) has biased composition (basic and acidic residues). Residues 294 to 303 (SPVDLRDKSK) are compositionally biased toward basic and acidic residues. Basic residues predominate over residues 304–315 (DRRSRSKERKSK). Residues 316-325 (RSEIDKEKKP) show a composition bias toward basic and acidic residues. Residues Ser-328, Ser-354, Ser-356, Ser-366, and Ser-368 each carry the phosphoserine modification. Over residues 342–367 (PSRRPGRSPKRRSLSPKLRDKSRRSR) the composition is skewed to basic residues. Phosphothreonine is present on Thr-385. Residue Ser-387 is modified to Phosphoserine. 2 stretches are compositionally biased toward basic and acidic residues: residues 395-408 (RSLE…ERRR) and 415-429 (RPRD…RSKD). Phosphoserine is present on residues Ser-427, Ser-431, and Ser-437. Over residues 438 to 497 (PTRRRSRSPIRRRSRSPLRRSRSPRRRSRSPRRRDRSRRSRSRLRRRSRSRGGHRRRSRS) the composition is skewed to basic residues. Residues Ser-518, Ser-519, Ser-520, Ser-565, Ser-569, Ser-576, Ser-578, and Ser-580 each carry the phosphoserine modification. The segment covering 518–535 (SSSDDNLEDFDVEEEDEE) has biased composition (acidic residues). The span at 562-581 (SVPSEPSSPQSSTRSRSPSP) shows a compositional bias: low complexity. Residues Lys-593 and Lys-659 each participate in a glycyl lysine isopeptide (Lys-Gly) (interchain with G-Cter in SUMO2) cross-link. The Protein kinase domain occupies 687 to 1006 (YNVYGYTGQG…ALQHAFIQEK (320 aa)). ATP-binding positions include 693–701 (TGQGVFSNV) and Lys-717. Lys-717 carries the N6-acetyllysine modification. The active-site Proton acceptor is the Asp-815. The residue at position 849 (Tyr-849) is a Phosphotyrosine. A Phosphoserine modification is found at Ser-852.

Belongs to the protein kinase superfamily. CMGC Ser/Thr protein kinase family. In terms of assembly, interacts with CLK1 C-terminus. Associates with the U5 snRNP and NCOR1 deacetylase complexes. Identified in the spliceosome C complex. Post-translationally, phosphorylated by CLK1. Autophosphorylated; phosphorylation inhibits interaction with its targets, such as PRPF6 or SMARCA4.

Its subcellular location is the nucleus. It is found in the chromosome. The protein resides in the centromere. It localises to the kinetochore. It catalyses the reaction L-seryl-[protein] + ATP = O-phospho-L-seryl-[protein] + ADP + H(+). It carries out the reaction L-threonyl-[protein] + ATP = O-phospho-L-threonyl-[protein] + ADP + H(+). Its function is as follows. Serine/threonine kinase involved in spliceosomal assembly as well as mitosis and signaling regulation. Connects chromatin mediated regulation of transcription and pre-mRNA splicing. During spliceosomal assembly, interacts with and phosphorylates PRPF6 and PRPF31, components of the U4/U6-U5 tri-small nuclear ribonucleoprotein (snRNP), to facilitate the formation of the spliceosome B complex. Plays a role in regulating transcription and the spindle assembly checkpoint (SAC). Associates with U5 snRNP and NCOR1 deacetylase complexes which may allow a coordination of pre-mRNA splicing with chromatin remodeling events involved in transcriptional regulation. Associates and probably phosphorylates SMARCA4 and NCOR1. Phosphorylates SRSF1. Associates with kinetochores during mitosis and is necessary for recruitment and maintenance of the checkpoint proteins such as MAD1L1 and MAD12L1 at the kinetochores. Phosphorylates and regulates the activity of the transcription factors such as ELK1 and KLF13. Phosphorylates nuclear YAP1 and WWTR1/TAZ which induces nuclear exclusion and regulates Hippo signaling pathway, involved in tissue growth control. The protein is Serine/threonine-protein kinase PRP4 homolog (Prp4k) of Mus musculus (Mouse).